Here is a 232-residue protein sequence, read N- to C-terminus: Clarin-2 (232 aa).

Transmembrane regions (helical) follow at residues 8-28, 101-121, 139-159, and 188-208; these read VWYGLASLLSFSSFLLIIVAL, ILLLLFLALALALVSMGFAIL, LWNVLAGGVVALAIGSFMAAV, and SFWICVASASAHAANLVVVAI.

It belongs to the clarin family. In terms of tissue distribution, detected in inner ear, particularly in hair bundles of auditory hair cells and is enriched in apical stereocilia. Detected in eye, but not in brain or muscle.

It is found in the cell projection. Its subcellular location is the stereocilium membrane. Plays a key role to hearing function. Required for normal organization and maintenance of the stereocilia bundle and for mechano-electrical transduction. The chain is Clarin-2 from Mus musculus (Mouse).